Consider the following 403-residue polypeptide: Tryptophan synthase beta chain (403 aa).

An N6-(pyridoxal phosphate)lysine modification is found at Lys-93.

The protein belongs to the TrpB family. As to quaternary structure, tetramer of two alpha and two beta chains. It depends on pyridoxal 5'-phosphate as a cofactor.

The enzyme catalyses (1S,2R)-1-C-(indol-3-yl)glycerol 3-phosphate + L-serine = D-glyceraldehyde 3-phosphate + L-tryptophan + H2O. The protein operates within amino-acid biosynthesis; L-tryptophan biosynthesis; L-tryptophan from chorismate: step 5/5. The beta subunit is responsible for the synthesis of L-tryptophan from indole and L-serine. The chain is Tryptophan synthase beta chain from Acinetobacter baylyi (strain ATCC 33305 / BD413 / ADP1).